The chain runs to 342 residues: tRNA-specific 2-thiouridylase MnmA (342 aa).

Residues 6–13 (LLSGGVDS) and leucine 32 each bind ATP. The active-site Nucleophile is cysteine 92. An intrachain disulfide couples cysteine 92 to cysteine 191. An ATP-binding site is contributed by glycine 116. The interval 138 to 140 (KDQ) is interaction with tRNA. Cysteine 191 serves as the catalytic Cysteine persulfide intermediate. An interaction with tRNA region spans residues 293-294 (RY).

This sequence belongs to the MnmA/TRMU family.

The protein resides in the cytoplasm. The enzyme catalyses S-sulfanyl-L-cysteinyl-[protein] + uridine(34) in tRNA + AH2 + ATP = 2-thiouridine(34) in tRNA + L-cysteinyl-[protein] + A + AMP + diphosphate + H(+). Functionally, catalyzes the 2-thiolation of uridine at the wobble position (U34) of tRNA, leading to the formation of s(2)U34. This is tRNA-specific 2-thiouridylase MnmA from Helicobacter pylori (strain ATCC 700392 / 26695) (Campylobacter pylori).